The following is a 286-amino-acid chain: Energy-coupling factor transporter ATP-binding protein EcfA2 (286 aa).

Residues 3–246 form the ABC transporter domain; that stretch reads IRFDNVSYTY…KKKLADWHIG (244 aa). 40-47 lines the ATP pocket; that stretch reads GQTGSGKS.

This sequence belongs to the ABC transporter superfamily. Energy-coupling factor EcfA family. As to quaternary structure, forms a stable energy-coupling factor (ECF) transporter complex composed of 2 membrane-embedded substrate-binding proteins (S component), 2 ATP-binding proteins (A component) and 2 transmembrane proteins (T component).

It is found in the cell membrane. Functionally, ATP-binding (A) component of a common energy-coupling factor (ECF) ABC-transporter complex. Unlike classic ABC transporters this ECF transporter provides the energy necessary to transport a number of different substrates. The sequence is that of Energy-coupling factor transporter ATP-binding protein EcfA2 from Staphylococcus aureus (strain USA300).